Here is an 845-residue protein sequence, read N- to C-terminus: Protein P (845 aa).

Residues 1–179 are terminal protein domain (TP); that stretch reads MPLSYQHFRK…FCGSPYSWEQ (179 aa). The segment at 180–348 is spacer; it reads ELQHGRLVIK…YCLSHLVNLR (169 aa). The segment at 226-252 is disordered; that stretch reads GLQPRQGRLASSQPSRSGSIRAKAHPS. Residues 234-243 show a composition bias toward polar residues; sequence LASSQPSRSG. Residues 349–692 form a polymerase/reverse transcriptase domain (RT) region; sequence EDWGPCDEHG…YMNLYPVARQ (344 aa). In terms of domain architecture, Reverse transcriptase spans 359–602; that stretch reads EHHIRIPRTP…YSLNFMGYII (244 aa). Positions 431, 553, and 554 each coordinate Mg(2+). A rnaseH domain (RH) region spans residues 693–845; it reads RPGLCQVFAD…SPLHVAWRPP (153 aa).

It belongs to the hepadnaviridae P protein family.

It carries out the reaction DNA(n) + a 2'-deoxyribonucleoside 5'-triphosphate = DNA(n+1) + diphosphate. The enzyme catalyses Endonucleolytic cleavage to 5'-phosphomonoester.. With respect to regulation, activated by host HSP70 and HSP40 in vitro to be able to bind the epsilon loop of the pgRNA. Because deletion of the RNase H region renders the protein partly chaperone-independent, the chaperones may be needed indirectly to relieve occlusion of the RNA-binding site by this domain. Inhibited by several reverse-transcriptase inhibitors: Lamivudine, Adefovir and Entecavir. Multifunctional enzyme that converts the viral RNA genome into dsDNA in viral cytoplasmic capsids. This enzyme displays a DNA polymerase activity that can copy either DNA or RNA templates, and a ribonuclease H (RNase H) activity that cleaves the RNA strand of RNA-DNA heteroduplexes in a partially processive 3'- to 5'-endonucleasic mode. Neo-synthesized pregenomic RNA (pgRNA) are encapsidated together with the P protein, and reverse-transcribed inside the nucleocapsid. Initiation of reverse-transcription occurs first by binding the epsilon loop on the pgRNA genome, and is initiated by protein priming, thereby the 5'-end of (-)DNA is covalently linked to P protein. Partial (+)DNA is synthesized from the (-)DNA template and generates the relaxed circular DNA (RC-DNA) genome. After budding and infection, the RC-DNA migrates in the nucleus, and is converted into a plasmid-like covalently closed circular DNA (cccDNA). The activity of P protein does not seem to be necessary for cccDNA generation, and is presumably released from (+)DNA by host nuclear DNA repair machinery. This Homo sapiens (Human) protein is Protein P.